The primary structure comprises 937 residues: Chaperone protein ClpD2, chloroplastic (937 aa).

A chloroplast-targeting transit peptide spans 1–80 (MEACCCSSSS…FERFTERAVK (80 aa)). Repeat stretches follow at residues 81 to 137 (AVVF…VGKE) and 152 to 217 (FSGA…VQGE). Positions 81-217 (AVVFSQREAR…KQALTRVQGE (137 aa)) constitute a Clp R domain. Residues 259–513 (LALFCLDLTM…RMESFKRKKE (255 aa)) form an i region. Residues 304–311 (GEAGVGKT) and 658–665 (GPTGVGKT) contribute to the ATP site. The tract at residues 584–775 (VGSEEIARVT…LIVMTSNVGS (192 aa)) is II.

This sequence belongs to the ClpA/ClpB family. ClpD subfamily. As to expression, highly expressed in stems, culms and leaves.

It is found in the plastid. The protein resides in the chloroplast. Its function is as follows. Molecular chaperone that may interact with a ClpP-like protease involved in degradation of denatured proteins in the chloroplast. The polypeptide is Chaperone protein ClpD2, chloroplastic (CLPD2) (Oryza sativa subsp. japonica (Rice)).